A 293-amino-acid polypeptide reads, in one-letter code: Ribonuclease P/MRP protein subunit RPP1 (293 aa).

The protein belongs to the eukaryotic/archaeal RNase P protein component 3 family. As to quaternary structure, component of nuclear RNase P and RNase MRP complexes. RNase P consists of an RNA moiety and at least 9 protein subunits including POP1, POP3, POP4, POP5, POP6, POP7, POP8, RPP1 and RPR2. RNase MRP complex consists of an RNA moiety and at least 10 protein subunits including POP1, POP3, POP4, POP5, POP6, POP7, POP8, RMP1, RPP1 and SNM1, many of which are shared with the RNase P complex.

The protein localises to the nucleus. The catalysed reaction is Endonucleolytic cleavage of RNA, removing 5'-extranucleotides from tRNA precursor.. Component of ribonuclease P, a protein complex that generates mature tRNA molecules by cleaving their 5'-ends. Also a component of RNase MRP, which cleaves pre-rRNA sequences. In Saccharomyces cerevisiae (strain ATCC 204508 / S288c) (Baker's yeast), this protein is Ribonuclease P/MRP protein subunit RPP1 (RPP1).